The chain runs to 299 residues: Ribosomal RNA small subunit methyltransferase H (299 aa).

Residues 36–38 (GGH), D55, F82, D97, and Q104 each bind S-adenosyl-L-methionine.

This sequence belongs to the methyltransferase superfamily. RsmH family.

Its subcellular location is the cytoplasm. It carries out the reaction cytidine(1402) in 16S rRNA + S-adenosyl-L-methionine = N(4)-methylcytidine(1402) in 16S rRNA + S-adenosyl-L-homocysteine + H(+). Its function is as follows. Specifically methylates the N4 position of cytidine in position 1402 (C1402) of 16S rRNA. This is Ribosomal RNA small subunit methyltransferase H from Synechococcus sp. (strain RCC307).